A 339-amino-acid polypeptide reads, in one-letter code: Protein pelota homolog (339 aa).

Belongs to the eukaryotic release factor 1 family. Pelota subfamily. In terms of assembly, monomer. The cofactor is a divalent metal cation.

It localises to the cytoplasm. Its function is as follows. May function in recognizing stalled ribosomes, interact with stem-loop structures in stalled mRNA molecules, and effect endonucleolytic cleavage of the mRNA. May play a role in the release non-functional ribosomes and degradation of damaged mRNAs. Has endoribonuclease activity. The polypeptide is Protein pelota homolog (Picrophilus torridus (strain ATCC 700027 / DSM 9790 / JCM 10055 / NBRC 100828 / KAW 2/3)).